The sequence spans 105 residues: Thioredoxin (105 aa).

In terms of domain architecture, Thioredoxin spans 2–105; that stretch reads VKSVGNLADF…KLEETIKSLV (104 aa). Active-site nucleophile residues include Cys32 and Cys35. An intrachain disulfide couples Cys32 to Cys35. S-nitrosocysteine occurs at positions 69 and 73.

The protein belongs to the thioredoxin family. Post-translationally, may be nitrosylated on several cysteine residues, depending on the oxidation state. Nitrosylated Cys-73 may serve as donor for nitrosylation of target proteins.

It localises to the nucleus. The protein localises to the cytoplasm. It is found in the secreted. Its function is as follows. Participates in various redox reactions through the reversible oxidation of its active center dithiol to a disulfide and catalyzes dithiol-disulfide exchange reactions. Plays a role in the reversible S-nitrosylation of cysteine residues in target proteins, and thereby contributes to the response to intracellular nitric oxide. Nitrosylates the active site Cys of CASP3 in response to nitric oxide (NO), and thereby inhibits caspase-3 activity. Induces the FOS/JUN AP-1 DNA binding activity in ionizing radiation (IR) cells through its oxidation/reduction status and stimulates AP-1 transcriptional activity. This is Thioredoxin (TXN) from Gallus gallus (Chicken).